A 702-amino-acid polypeptide reads, in one-letter code: MADS-box MEF2 type transcription factor MIG1 (702 aa).

The 61-residue stretch at M1–D61 folds into the MADS-box domain. 2 disordered regions span residues G73 to T608 and P658 to S702. The segment covering G86–D96 has biased composition (acidic residues). Positions A132–P144 are enriched in pro residues. Positions H145–P155 are enriched in low complexity. Polar residues predominate over residues G180–M195. Positions T201 to P241 are enriched in pro residues. Low complexity-rich tracts occupy residues P273 to P284, E326 to E343, and E350 to P371. Positions V456 to E465 are enriched in polar residues. Composition is skewed to low complexity over residues R487–A512 and D530–S553. Positions Q554–M567 are enriched in polar residues. The segment covering P587–P600 has biased composition (pro residues). Residues N693–S702 show a composition bias toward basic and acidic residues.

Belongs to the MEF2 family. In terms of assembly, interacts with MAPK MPS1.

Its subcellular location is the nucleus. Transcription factor acting downstream of the MPS1 MAP kinase (MAPK) cascade during conidiation and plant infection. Required for overcoming plant defense responses and the differentiation of secondary infectious hyphae in live plant cells. In Pyricularia oryzae (strain 70-15 / ATCC MYA-4617 / FGSC 8958) (Rice blast fungus), this protein is MADS-box MEF2 type transcription factor MIG1.